The primary structure comprises 386 residues: uncharacterized protein (386 aa).

Belongs to the mimivirus L17x/L18x family.

This is an uncharacterized protein from Acanthamoeba polyphaga mimivirus (APMV).